The sequence spans 578 residues: Solute carrier family 15 member 3 (578 aa).

Basic and acidic residues predominate over residues 1-15 (MSAPRAEEQPSRSGE). The tract at residues 1 to 27 (MSAPRAEEQPSRSGERQPLVARGPRGP) is disordered. A run of 5 helical transmembrane segments spans residues 33 to 53 (TAAA…FGVT), 77 to 97 (LLFL…ADVY), 102 to 122 (LTIS…LTTI), 155 to 175 (PYCA…ASSV), and 201 to 221 (WFYW…AFIE). The N-linked (GlcNAc...) asparagine glycan is linked to Asn-223. Residues 232 to 252 (IIVGLVGLAFFIFLFATPVFI) traverse the membrane as a helical segment. Positions 280 to 301 (SRDSESAHLLPDQRSNQPGPSP) are disordered. The chain crosses the membrane as a helical span at residues 308-328 (FQVLVKILPVMVTLVPYWMVY). Asn-353 is a glycosylation site (N-linked (GlcNAc...) asparagine). 2 helical membrane-spanning segments follow: residues 367 to 387 (IPEA…IPVK) and 405 to 425 (LQKM…AGVL). N-linked (GlcNAc...) asparagine glycosylation is present at Asn-436. 3 consecutive transmembrane segments (helical) span residues 462 to 481 (YLLI…EFAY), 494 to 514 (GIFF…VALL), and 538 to 558 (YFFL…WIAG).

The protein belongs to the major facilitator superfamily. Proton-dependent oligopeptide transporter (POT/PTR) (TC 2.A.17) family. In terms of tissue distribution, expressed highly in bone marrow derived macrophages, and weakly in spleen and lung. Expressed in plasmacytoid dendritic cells (pDCs) in response to toll-like receptors (TLR) stimulation.

The protein resides in the lysosome membrane. It is found in the endosome membrane. It carries out the reaction N-acetyl-D-muramoyl-L-alanyl-D-isoglutamine(out) + n H(+)(out) = N-acetyl-D-muramoyl-L-alanyl-D-isoglutamine(in) + n H(+)(in). The catalysed reaction is glycylglycylglycine(out) + n H(+)(out) = glycylglycylglycine(in) + n H(+)(in). The enzyme catalyses carnosine(out) + n H(+)(out) = carnosine(in) + n H(+)(in). It catalyses the reaction L-histidine(out) + n H(+)(out) = L-histidine(in) + n H(+)(in). In terms of biological role, proton-coupled amino-acid transporter that transports free histidine and certain di- and tripeptides, and is involved in innate immune response. Also able to transport carnosine. Involved in the detection of microbial pathogens by toll-like receptors (TLRs) and NOD-like receptors (NLRs), probably by mediating transport of bacterial peptidoglycans across the endolysosomal membrane: catalyzes the transport of certain bacterial peptidoglycans, such as muramyl dipeptide (MDP), the NOD2 ligand. This chain is Solute carrier family 15 member 3, found in Mus musculus (Mouse).